The primary structure comprises 448 residues: Glutamate--tRNA ligase 1 (448 aa).

The 'HIGH' region motif lies at 10–20 (PSPTGMLHVGN). The 'KMSKS' region motif lies at 240–244 (KISKR). Lys243 provides a ligand contact to ATP.

The protein belongs to the class-I aminoacyl-tRNA synthetase family. Glutamate--tRNA ligase type 1 subfamily. In terms of assembly, monomer.

The protein resides in the cytoplasm. The enzyme catalyses tRNA(Glu) + L-glutamate + ATP = L-glutamyl-tRNA(Glu) + AMP + diphosphate. In terms of biological role, catalyzes the attachment of glutamate to tRNA(Glu) in a two-step reaction: glutamate is first activated by ATP to form Glu-AMP and then transferred to the acceptor end of tRNA(Glu). The protein is Glutamate--tRNA ligase 1 of Rickettsia typhi (strain ATCC VR-144 / Wilmington).